A 249-amino-acid chain; its full sequence is Segregation and condensation protein A (249 aa).

The protein belongs to the ScpA family. As to quaternary structure, component of a cohesin-like complex composed of ScpA, ScpB and the Smc homodimer, in which ScpA and ScpB bind to the head domain of Smc. The presence of the three proteins is required for the association of the complex with DNA.

The protein resides in the cytoplasm. Its function is as follows. Participates in chromosomal partition during cell division. May act via the formation of a condensin-like complex containing Smc and ScpB that pull DNA away from mid-cell into both cell halves. This chain is Segregation and condensation protein A, found in Listeria monocytogenes serotype 4a (strain HCC23).